Here is a 365-residue protein sequence, read N- to C-terminus: Putrescine carbamoyltransferase (365 aa).

Carbamoyl phosphate is bound by residues 54-58, arginine 105, and histidine 132; that span reads STRTR. 277–280 is a putrescine binding site; it reads HCLP.

The protein belongs to the aspartate/ornithine carbamoyltransferase superfamily. PTCase family. Homotrimer.

The protein localises to the cytoplasm. The enzyme catalyses carbamoyl phosphate + putrescine = N-carbamoylputrescine + phosphate + H(+). The protein operates within amine and polyamine biosynthesis; putrescine biosynthesis via agmatine pathway; putrescine from N-carbamoylputrescine (transferase route): step 1/1. Its function is as follows. Catalyzes the phosphorolysis of N-carbamoylputrescine to form carbamoyl phosphate and putrescine. Is involved in the degradation pathway of the polyamine agmatine. The polypeptide is Putrescine carbamoyltransferase (Mycoplasma mycoides subsp. mycoides SC (strain CCUG 32753 / NCTC 10114 / PG1)).